The sequence spans 124 residues: Fluoride-specific ion channel FluC 2 (124 aa).

The next 4 helical transmembrane spans lie at 9 to 29, 34 to 54, 67 to 87, and 99 to 119; these read LGIF…STWL, DFPW…IFLV, LILA…SLML, and FSLV…AYFL. Na(+) contacts are provided by Gly-77 and Thr-80.

Belongs to the fluoride channel Fluc/FEX (TC 1.A.43) family.

Its subcellular location is the cell membrane. It catalyses the reaction fluoride(in) = fluoride(out). With respect to regulation, na(+) is not transported, but it plays an essential structural role and its presence is essential for fluoride channel function. In terms of biological role, fluoride-specific ion channel. Important for reducing fluoride concentration in the cell, thus reducing its toxicity. The sequence is that of Fluoride-specific ion channel FluC 2 from Streptococcus pneumoniae (strain ATCC BAA-255 / R6).